The sequence spans 510 residues: Pantetheinase (510 aa).

The first 22 residues, 1–22 (MIMSQLLNYVAVLFFCVSRASS), serve as a signal peptide directing secretion. Residues 31 to 307 (YEHAVILPNA…GKLLLAQLDS (277 aa)) enclose the CN hydrolase domain. A glycan (N-linked (GlcNAc...) asparagine) is linked at Asn39. The active-site Proton acceptor is Glu80. N-linked (GlcNAc...) asparagine glycans are attached at residues Asn87 and Asn147. Lys179 functions as the Proton donor in the catalytic mechanism. Residue Asn201 is glycosylated (N-linked (GlcNAc...) asparagine). Cys212 serves as the catalytic Nucleophile. 2 N-linked (GlcNAc...) asparagine glycosylation sites follow: Asn316 and Asn354. A lipid anchor (GPI-anchor amidated aspartate) is attached at Asp492. A propeptide spans 493–510 (LTTQALRLNPKTDAWKSK) (removed in mature form). Thr504 is a glycosylation site (O-linked (GalNAc...) threonine).

It belongs to the carbon-nitrogen hydrolase superfamily. BTD/VNN family. Monomer.

The protein localises to the cell membrane. It carries out the reaction (R)-pantetheine + H2O = cysteamine + (R)-pantothenate. Its function is as follows. Amidohydrolase that hydrolyzes specifically one of the carboamide linkages in D-pantetheine thus recycling pantothenic acid (vitamin B5) and releasing cysteamine. This Bos taurus (Bovine) protein is Pantetheinase (VNN1).